Here is a 258-residue protein sequence, read N- to C-terminus: Putative cysteine-rich repeat secretory protein 35 (258 aa).

The signal sequence occupies residues 1-29; sequence MYSSYSLSKRLIYVPILAIQFLLVRSVSS. Gnk2-homologous domains are found at residues 36–138 and 146–255; these read YLNH…TIKP and FKNT…LYPF.

This sequence belongs to the cysteine-rich repeat secretory protein family.

Its subcellular location is the secreted. This is Putative cysteine-rich repeat secretory protein 35 (CRRSP35) from Arabidopsis thaliana (Mouse-ear cress).